Consider the following 591-residue polypeptide: L-fucose isomerase (591 aa).

Active-site proton acceptor residues include E337 and D361. Mn(2+) contacts are provided by E337, D361, and H528.

Belongs to the L-fucose isomerase family. In terms of assembly, homohexamer. Mn(2+) serves as cofactor.

Its subcellular location is the cytoplasm. The enzyme catalyses L-fucose = L-fuculose. It participates in carbohydrate degradation; L-fucose degradation; L-lactaldehyde and glycerone phosphate from L-fucose: step 1/3. Functionally, converts the aldose L-fucose into the corresponding ketose L-fuculose. The polypeptide is L-fucose isomerase (Salmonella choleraesuis (strain SC-B67)).